Consider the following 616-residue polypeptide: Endonuclease 8-like 3 (616 aa).

The FPG-type zinc finger occupies 271-305; the sequence is KVYKRPNCGQCGTKITVCRLGEHNRMTYFCPKCQK. The segment at 341-370 adopts a RanBP2-type zinc-finger fold; the sequence is KEEHWACAVCTLINKPSDKQCDACLTLRPE. The segment at 491-524 is disordered; that stretch reads LKTGHTTSNTIHLSSTISSPQSKMTGDAAAKTGN. Positions 494–514 are enriched in polar residues; sequence GHTTSNTIHLSSTISSPQSKM. Residues cysteine 527, histidine 530, cysteine 553, cysteine 561, cysteine 574, histidine 576, cysteine 599, and cysteine 607 each coordinate Zn(2+). 2 GRF-type zinc fingers span residues 527-570 and 574-616; these read CSAH…ADLH and CNHG…AKTE.

This sequence belongs to the FPG family.

Its subcellular location is the nucleus. The protein resides in the chromosome. It carries out the reaction 2'-deoxyribonucleotide-(2'-deoxyribose 5'-phosphate)-2'-deoxyribonucleotide-DNA = a 3'-end 2'-deoxyribonucleotide-(2,3-dehydro-2,3-deoxyribose 5'-phosphate)-DNA + a 5'-end 5'-phospho-2'-deoxyribonucleoside-DNA + H(+). DNA glycosylase which prefers single-stranded DNA (ssDNA), or partially ssDNA structures such as bubble and fork structures, to double-stranded DNA (dsDNA). Mediates interstrand cross-link repair in response to replication stress: recruited to replication stress sites via interaction with ubiquitinated CMG helicase and acts by mediating DNA glycosylase activity. Cleaves one of the two N-glycosyl bonds comprising the interstrand cross-link, which avoids the formation of a double-strand break but generates an abasic site that is bypassed by translesion synthesis polymerases. The polypeptide is Endonuclease 8-like 3 (Xenopus laevis (African clawed frog)).